The following is a 371-amino-acid chain: Anhydro-N-acetylmuramic acid kinase (371 aa).

12 to 20 provides a ligand contact to ATP; sequence GTVLDGNID.

This sequence belongs to the anhydro-N-acetylmuramic acid kinase family.

It carries out the reaction 1,6-anhydro-N-acetyl-beta-muramate + ATP + H2O = N-acetyl-D-muramate 6-phosphate + ADP + H(+). It functions in the pathway amino-sugar metabolism; 1,6-anhydro-N-acetylmuramate degradation. Its pathway is cell wall biogenesis; peptidoglycan recycling. In terms of biological role, catalyzes the specific phosphorylation of 1,6-anhydro-N-acetylmuramic acid (anhMurNAc) with the simultaneous cleavage of the 1,6-anhydro ring, generating MurNAc-6-P. Is required for the utilization of anhMurNAc either imported from the medium or derived from its own cell wall murein, and thus plays a role in cell wall recycling. This chain is Anhydro-N-acetylmuramic acid kinase, found in Brucella anthropi (strain ATCC 49188 / DSM 6882 / CCUG 24695 / JCM 21032 / LMG 3331 / NBRC 15819 / NCTC 12168 / Alc 37) (Ochrobactrum anthropi).